The primary structure comprises 645 residues: Phosphomethylpyrimidine synthase (645 aa).

Residues asparagine 235, methionine 264, tyrosine 293, histidine 329, 349–351 (SRG), 390–393 (DGLR), and glutamate 429 each bind substrate. Histidine 433 contributes to the Zn(2+) binding site. Tyrosine 456 lines the substrate pocket. Residue histidine 497 participates in Zn(2+) binding. Positions 577, 580, and 585 each coordinate [4Fe-4S] cluster.

The protein belongs to the ThiC family. In terms of assembly, homodimer. Requires [4Fe-4S] cluster as cofactor.

The catalysed reaction is 5-amino-1-(5-phospho-beta-D-ribosyl)imidazole + S-adenosyl-L-methionine = 4-amino-2-methyl-5-(phosphooxymethyl)pyrimidine + CO + 5'-deoxyadenosine + formate + L-methionine + 3 H(+). It participates in cofactor biosynthesis; thiamine diphosphate biosynthesis. Catalyzes the synthesis of the hydroxymethylpyrimidine phosphate (HMP-P) moiety of thiamine from aminoimidazole ribotide (AIR) in a radical S-adenosyl-L-methionine (SAM)-dependent reaction. The sequence is that of Phosphomethylpyrimidine synthase from Vibrio cholerae serotype O1 (strain ATCC 39541 / Classical Ogawa 395 / O395).